The primary structure comprises 579 residues: Trehalase (579 aa).

A signal peptide spans 1–15; the sequence is MRLFLLLVGLTTVIA. Residues asparagine 29 and asparagine 58 are each glycosylated (N-linked (GlcNAc...) asparagine). Substrate is bound by residues arginine 161, 168–169, asparagine 205, 214–216, 279–281, and glycine 313; these read WD, RSQ, and RPE. N-linked (GlcNAc...) asparagine glycosylation is present at asparagine 205. Residue aspartate 315 is the Proton donor/acceptor of the active site. Asparagine 331 is a glycosylation site (N-linked (GlcNAc...) asparagine). Glutamate 513 acts as the Proton donor/acceptor in catalysis. A substrate-binding site is contributed by glutamate 528. A compositionally biased stretch (polar residues) spans 560–569; the sequence is DASANNGQSN. The interval 560 to 579 is disordered; sequence DASANNGQSNEESETDSKEK.

Belongs to the glycosyl hydrolase 37 family. In terms of tissue distribution, in midgut and Malpighian tubules.

It is found in the basolateral cell membrane. The catalysed reaction is alpha,alpha-trehalose + H2O = alpha-D-glucose + beta-D-glucose. Its function is as follows. Involved in uptake of hemolymph trehalose into epithelial cells in the midgut of feeding larvae. The polypeptide is Trehalase (Bombyx mori (Silk moth)).